The primary structure comprises 279 residues: 5'-nucleotidase SurE 1 (279 aa).

Positions 12, 13, 45, and 103 each coordinate a divalent metal cation.

The protein belongs to the SurE nucleotidase family. The cofactor is a divalent metal cation.

The protein localises to the cytoplasm. It catalyses the reaction a ribonucleoside 5'-phosphate + H2O = a ribonucleoside + phosphate. Its function is as follows. Nucleotidase that shows phosphatase activity on nucleoside 5'-monophosphates. This is 5'-nucleotidase SurE 1 from Chlamydia caviae (strain ATCC VR-813 / DSM 19441 / 03DC25 / GPIC) (Chlamydophila caviae).